A 290-amino-acid chain; its full sequence is Diaminopimelate epimerase (290 aa).

Asn17, Gln49, and Asn69 together coordinate substrate. The active-site Proton donor is the Cys78. Residues Gly79–Asn80, Asn166, Asn199, and Glu217–Arg218 contribute to the substrate site. Residue Cys226 is the Proton acceptor of the active site. Residue Gly227–Ser228 participates in substrate binding.

This sequence belongs to the diaminopimelate epimerase family. In terms of assembly, homodimer.

The protein resides in the cytoplasm. The catalysed reaction is (2S,6S)-2,6-diaminopimelate = meso-2,6-diaminopimelate. Its pathway is amino-acid biosynthesis; L-lysine biosynthesis via DAP pathway; DL-2,6-diaminopimelate from LL-2,6-diaminopimelate: step 1/1. Functionally, catalyzes the stereoinversion of LL-2,6-diaminopimelate (L,L-DAP) to meso-diaminopimelate (meso-DAP), a precursor of L-lysine and an essential component of the bacterial peptidoglycan. The polypeptide is Diaminopimelate epimerase (Afipia carboxidovorans (strain ATCC 49405 / DSM 1227 / KCTC 32145 / OM5) (Oligotropha carboxidovorans)).